A 461-amino-acid chain; its full sequence is Fibrinogen C domain-containing protein 1 (461 aa).

The tract at residues 1–24 (MVNDRWKTMGGAAQLEDRPRDKPQ) is disordered. Topologically, residues 1–33 (MVNDRWKTMGGAAQLEDRPRDKPQRPSCGYVLC) are cytoplasmic. A compositionally biased stretch (basic and acidic residues) spans 15–24 (LEDRPRDKPQ). Residues 34–54 (TVLLALAVLLAVAVTGAVLFL) traverse the membrane as a helical; Signal-anchor for type II membrane protein segment. Over 55-461 (NHAHAPGTAP…MKIRPVREDR (407 aa)) the chain is Extracellular. The tract at residues 214-238 (GRPRNKADLQRAPARGTRPRGCATG) is disordered. In terms of domain architecture, Fibrinogen C-terminal spans 235 to 458 (CATGSRPRDC…FSEMKIRPVR (224 aa)). Cysteines 244 and 273 form a disulfide. An N-linked (GlcNAc...) asparagine glycan is attached at Asn340. 2 residues coordinate Ca(2+): Asp393 and Asp395. Cysteines 401 and 414 form a disulfide.

Homotetramer; disulfide-linked. Expressed in the small and large intestinal epithelial cells with a highly polarized localization to the apical surface corresponding to the brush border and in the ducts of the salivary gland.

Its subcellular location is the membrane. In terms of biological role, acetyl group-binding receptor which shows a high-affinity and calcium-dependent binding to acetylated structures such as chitin, some N-acetylated carbohydrates, and amino acids, but not to their non-acetylated counterparts. Can facilitate the endocytosis of acetylated components. This Homo sapiens (Human) protein is Fibrinogen C domain-containing protein 1 (FIBCD1).